A 260-amino-acid chain; its full sequence is MIFHANPGVIDLGVNIDHVATLRNARGTVYPDPIRAALLAEQAGADLITLHLREDRRHIRDADVRALRPQLATRMNLECAITQEMLDIACEIRPQDVCLVPERREEVTTEGGLDVAGRFELVKAACAQLAGAGIRVSLFIDPDADQIAAAAACGAPVIELHTGRYADAHTPAEQAAEFRRIADGADAGQKHGLVVNAGHGLHYTNVQPIAALPGIKELNIGHAIVAHAVFTGWENAVREMKAIMVAARLGTQYPAASTPA.

Asn15 contributes to the 3-amino-2-oxopropyl phosphate binding site. Asp17–His18 is a 1-deoxy-D-xylulose 5-phosphate binding site. Arg26 is a binding site for 3-amino-2-oxopropyl phosphate. The active-site Proton acceptor is the His51. 1-deoxy-D-xylulose 5-phosphate contacts are provided by Arg53 and His58. Glu78 functions as the Proton acceptor in the catalytic mechanism. Thr108 contributes to the 1-deoxy-D-xylulose 5-phosphate binding site. His199 (proton donor) is an active-site residue. 3-amino-2-oxopropyl phosphate is bound by residues Gly200 and Gly221–His222.

This sequence belongs to the PNP synthase family. In terms of assembly, homooctamer; tetramer of dimers.

Its subcellular location is the cytoplasm. The enzyme catalyses 3-amino-2-oxopropyl phosphate + 1-deoxy-D-xylulose 5-phosphate = pyridoxine 5'-phosphate + phosphate + 2 H2O + H(+). It functions in the pathway cofactor biosynthesis; pyridoxine 5'-phosphate biosynthesis; pyridoxine 5'-phosphate from D-erythrose 4-phosphate: step 5/5. Catalyzes the complicated ring closure reaction between the two acyclic compounds 1-deoxy-D-xylulose-5-phosphate (DXP) and 3-amino-2-oxopropyl phosphate (1-amino-acetone-3-phosphate or AAP) to form pyridoxine 5'-phosphate (PNP) and inorganic phosphate. The polypeptide is Pyridoxine 5'-phosphate synthase (Cupriavidus taiwanensis (strain DSM 17343 / BCRC 17206 / CCUG 44338 / CIP 107171 / LMG 19424 / R1) (Ralstonia taiwanensis (strain LMG 19424))).